Reading from the N-terminus, the 198-residue chain is 3-isopropylmalate dehydratase small subunit (198 aa).

It belongs to the LeuD family. LeuD type 1 subfamily. Heterodimer of LeuC and LeuD.

It carries out the reaction (2R,3S)-3-isopropylmalate = (2S)-2-isopropylmalate. Its pathway is amino-acid biosynthesis; L-leucine biosynthesis; L-leucine from 3-methyl-2-oxobutanoate: step 2/4. Its function is as follows. Catalyzes the isomerization between 2-isopropylmalate and 3-isopropylmalate, via the formation of 2-isopropylmaleate. This Mycolicibacterium paratuberculosis (strain ATCC BAA-968 / K-10) (Mycobacterium paratuberculosis) protein is 3-isopropylmalate dehydratase small subunit.